The chain runs to 374 residues: Calcium/calmodulin-dependent protein kinase type 1 (374 aa).

A Protein kinase domain is found at Tyr-20 to Ile-276. Residues Leu-26 to Val-34 and Lys-49 each bind ATP. A Glycyl lysine isopeptide (Lys-Gly) (interchain with G-Cter in ubiquitin) cross-link involves residue Lys-59. Asp-141 acts as the Proton acceptor in catalysis. The residue at position 177 (Thr-177) is a Phosphothreonine; by CaMKK1 and CaMKK2. Residues Lys-263–Arg-264 carry the Involved in nuclear import motif. The segment at Ile-276–Met-316 is autoinhibitory domain. The interval Lys-296–Arg-317 is calmodulin-binding. Positions His-315–Leu-321 match the Nuclear export signal motif.

Belongs to the protein kinase superfamily. CAMK Ser/Thr protein kinase family. CaMK subfamily. In terms of assembly, monomer. Interacts with XPO1. Phosphorylated by CaMKK1 and CaMKK2 on Thr-177. Post-translationally, polybiquitinated by the E3 ubiquitin-protein ligase complex SCF(FBXL12), leading to proteasomal degradation. In terms of tissue distribution, widely expressed.

The protein localises to the cytoplasm. It is found in the nucleus. It carries out the reaction L-seryl-[protein] + ATP = O-phospho-L-seryl-[protein] + ADP + H(+). The enzyme catalyses L-threonyl-[protein] + ATP = O-phospho-L-threonyl-[protein] + ADP + H(+). Activated by Ca(2+)/calmodulin. Binding of calmodulin results in conformational change that relieves intrasteric autoinhibition and allows phosphorylation of Thr-177 within the activation loop by CaMKK1 or CaMKK2. Phosphorylation of Thr-177 results in several fold increase in total activity. Unlike CaMK4, is unable to exhibit autonomous activity after Ca(2+)/calmodulin activation. In terms of biological role, calcium/calmodulin-dependent protein kinase that operates in the calcium-triggered CaMKK-CaMK1 signaling cascade and, upon calcium influx, regulates transcription activators activity, cell cycle, hormone production, cell differentiation, actin filament organization and neurite outgrowth. Recognizes the substrate consensus sequence [MVLIF]-x-R-x(2)-[ST]-x(3)-[MVLIF]. Regulates axonal extension and growth cone motility in hippocampal and cerebellar nerve cells. Upon NMDA receptor-mediated Ca(2+) elevation, promotes dendritic growth in hippocampal neurons and is essential in synapses for full long-term potentiation (LTP) and ERK2-dependent translational activation. Downstream of NMDA receptors, promotes the formation of spines and synapses in hippocampal neurons by phosphorylating ARHGEF7/BETAPIX on 'Ser-516', which results in the enhancement of ARHGEF7 activity and activation of RAC1. Promotes neuronal differentiation and neurite outgrowth by activation and phosphorylation of MARK2 on 'Ser-91', 'Ser-92', 'Ser-93' and 'Ser-294'. Promotes nuclear export of HDAC5 and binding to 14-3-3 by phosphorylation of 'Ser-259' and 'Ser-498' in the regulation of muscle cell differentiation. Regulates NUMB-mediated endocytosis by phosphorylation of NUMB on 'Ser-275' and 'Ser-294'. Involved in the regulation of basal and estrogen-stimulated migration of medulloblastoma cells through ARHGEF7/BETAPIX phosphorylation. Is required for proper activation of cyclin-D1/CDK4 complex during G1 progression in diploid fibroblasts. Plays a role in K(+) and ANG2-mediated regulation of the aldosterone synthase (CYP11B2) to produce aldosterone in the adrenal cortex. Phosphorylates EIF4G3/eIF4GII. In vitro phosphorylates CREB1, ATF1, CFTR, MYL9 and SYN1/synapsin I. The chain is Calcium/calmodulin-dependent protein kinase type 1 (Camk1) from Rattus norvegicus (Rat).